Consider the following 209-residue polypeptide: MHILHIASSPRGERSVSLKLASRYLETLTSLHPESTVDVLDVWTIDLLPFDGPALEAKYADLQGVQMSDEQQAVWKQIHALGERFHRADVILFSVPMWNFGVPYRLKHLIDSVSQRGVLFEFDAQGMRGLLKGKNVVVFASRGVALGEDFPTEAYDHQVAYLKTWARMVGIPTIDAVLSEATLADPATAEANFTAALAEASKLAAAVQP.

FMN contacts are provided by residues Ser9, 15–17 (SVS), and 97–100 (MWNF).

This sequence belongs to the azoreductase type 1 family. Homodimer. FMN serves as cofactor.

It catalyses the reaction 2 a quinone + NADH + H(+) = 2 a 1,4-benzosemiquinone + NAD(+). The enzyme catalyses N,N-dimethyl-1,4-phenylenediamine + anthranilate + 2 NAD(+) = 2-(4-dimethylaminophenyl)diazenylbenzoate + 2 NADH + 2 H(+). Quinone reductase that provides resistance to thiol-specific stress caused by electrophilic quinones. Functionally, also exhibits azoreductase activity. Catalyzes the reductive cleavage of the azo bond in aromatic azo compounds to the corresponding amines. The sequence is that of FMN-dependent NADH:quinone oxidoreductase 2 from Pseudomonas syringae pv. tomato (strain ATCC BAA-871 / DC3000).